Consider the following 184-residue polypeptide: Large ribosomal subunit protein eL13 (184 aa).

The segment at 28–53 (PARKERRRQARKAKAQRIAPRPASGP) is disordered. Positions 31–42 (KERRRQARKAKA) are enriched in basic residues.

Belongs to the eukaryotic ribosomal protein eL13 family.

The protein is Large ribosomal subunit protein eL13 (RPL13) of Schistosoma mansoni (Blood fluke).